The primary structure comprises 509 residues: Glutamyl-tRNA(Gln) amidotransferase subunit B, mitochondrial (509 aa).

It belongs to the GatB/GatE family. GatB subfamily. As to quaternary structure, subunit of the heterotrimeric GatFAB amidotransferase (AdT) complex, composed of A, B and F subunits.

It localises to the mitochondrion. It carries out the reaction L-glutamyl-tRNA(Gln) + L-glutamine + ATP + H2O = L-glutaminyl-tRNA(Gln) + L-glutamate + ADP + phosphate + H(+). Functionally, allows the formation of correctly charged Gln-tRNA(Gln) through the transamidation of misacylated Glu-tRNA(Gln) in the mitochondria. The reaction takes place in the presence of glutamine and ATP through an activated gamma-phospho-Glu-tRNA(Gln). In Candida dubliniensis (strain CD36 / ATCC MYA-646 / CBS 7987 / NCPF 3949 / NRRL Y-17841) (Yeast), this protein is Glutamyl-tRNA(Gln) amidotransferase subunit B, mitochondrial.